A 104-amino-acid chain; its full sequence is Protein U9 (104 aa).

This chain is Protein U9 (U9), found in Homo sapiens (Human).